Here is a 216-residue protein sequence, read N- to C-terminus: Protein-methionine-sulfoxide reductase heme-binding subunit MsrQ (216 aa).

5 helical membrane-spanning segments follow: residues isoleucine 16–threonine 36, glutamate 48–isoleucine 68, alanine 82–aspartate 102, phenylalanine 119–isoleucine 139, and leucine 155–glycine 175.

It belongs to the MsrQ family. Heterodimer of a catalytic subunit (MsrP) and a heme-binding subunit (MsrQ). The cofactor is FMN. Heme b serves as cofactor.

Its subcellular location is the cell inner membrane. In terms of biological role, part of the MsrPQ system that repairs oxidized periplasmic proteins containing methionine sulfoxide residues (Met-O), using respiratory chain electrons. Thus protects these proteins from oxidative-stress damage caused by reactive species of oxygen and chlorine generated by the host defense mechanisms. MsrPQ is essential for the maintenance of envelope integrity under bleach stress, rescuing a wide series of structurally unrelated periplasmic proteins from methionine oxidation. MsrQ provides electrons for reduction to the reductase catalytic subunit MsrP, using the quinone pool of the respiratory chain. The chain is Protein-methionine-sulfoxide reductase heme-binding subunit MsrQ from Rhizobium meliloti (strain 1021) (Ensifer meliloti).